The chain runs to 368 residues: Histidinol-phosphate aminotransferase (368 aa).

Residue Lys-215 is modified to N6-(pyridoxal phosphate)lysine.

It belongs to the class-II pyridoxal-phosphate-dependent aminotransferase family. Histidinol-phosphate aminotransferase subfamily. As to quaternary structure, homodimer. Requires pyridoxal 5'-phosphate as cofactor.

It catalyses the reaction L-histidinol phosphate + 2-oxoglutarate = 3-(imidazol-4-yl)-2-oxopropyl phosphate + L-glutamate. The protein operates within amino-acid biosynthesis; L-histidine biosynthesis; L-histidine from 5-phospho-alpha-D-ribose 1-diphosphate: step 7/9. The protein is Histidinol-phosphate aminotransferase (hisC) of Buchnera aphidicola subsp. Acyrthosiphon pisum (strain APS) (Acyrthosiphon pisum symbiotic bacterium).